The sequence spans 363 residues: Fructose-bisphosphate aldolase 2 (363 aa).

Residue Ser-61 coordinates D-glyceraldehyde 3-phosphate. The Proton donor role is filled by Asp-109. Residues His-110, Asp-144, Glu-174, and His-226 each contribute to the Zn(2+) site. Gly-227 contacts dihydroxyacetone phosphate. Residue His-264 coordinates Zn(2+). 265–267 (GGS) is a binding site for dihydroxyacetone phosphate.

It belongs to the class II fructose-bisphosphate aldolase family. In terms of assembly, homodimer. It depends on Zn(2+) as a cofactor.

It catalyses the reaction beta-D-fructose 1,6-bisphosphate = D-glyceraldehyde 3-phosphate + dihydroxyacetone phosphate. It participates in carbohydrate degradation; glycolysis; D-glyceraldehyde 3-phosphate and glycerone phosphate from D-glucose: step 4/4. Its function is as follows. Catalyzes the aldol condensation of dihydroxyacetone phosphate (DHAP or glycerone-phosphate) with glyceraldehyde 3-phosphate (G3P) to form fructose 1,6-bisphosphate (FBP) in gluconeogenesis and the reverse reaction in glycolysis. In Paracoccidioides lutzii (strain ATCC MYA-826 / Pb01) (Paracoccidioides brasiliensis), this protein is Fructose-bisphosphate aldolase 2 (FBA2).